Reading from the N-terminus, the 353-residue chain is UPF0283 membrane protein YcjF (353 aa).

Residues 1–19 (MSEPLKPRIDFAEPLKEEP) show a composition bias toward basic and acidic residues. The segment at 1–35 (MSEPLKPRIDFAEPLKEEPTSAFKAQQTFSEAESR) is disordered. Helical transmembrane passes span 70–90 (MVMG…VQWT), 100–120 (VALG…GSVV), and 213–233 (ESTL…FIAW).

The protein belongs to the UPF0283 family.

It is found in the cell inner membrane. This chain is UPF0283 membrane protein YcjF, found in Salmonella gallinarum (strain 287/91 / NCTC 13346).